Reading from the N-terminus, the 185-residue chain is MISKIETETQSRMEKCTESFESQIKKIRTGRASPSILDSIQVEYYGASTPLRQLANIVAEDSSHLAVTVFDRNLTPYIEKAIQNSPLGLNPSSAANLIRVPLPPLTEDRRKELIKVIRSEAEAARVAVRNIRASVNKKSKETLKKKEISEDEDRQIQDNVQKLTDRYIKKIDEFLTKKEKEVMTV.

This sequence belongs to the RRF family.

It is found in the cytoplasm. Its function is as follows. Responsible for the release of ribosomes from messenger RNA at the termination of protein biosynthesis. May increase the efficiency of translation by recycling ribosomes from one round of translation to another. The polypeptide is Ribosome-recycling factor (Hamiltonella defensa subsp. Acyrthosiphon pisum (strain 5AT)).